A 525-amino-acid chain; its full sequence is GMP synthase [glutamine-hydrolyzing] (525 aa).

One can recognise a Glutamine amidotransferase type-1 domain in the interval R9 to L207. Residue C86 is the Nucleophile of the active site. Active-site residues include H181 and E183. The 193-residue stretch at W208–R400 folds into the GMPS ATP-PPase domain. Residue S235–S241 coordinates ATP.

Homodimer.

The catalysed reaction is XMP + L-glutamine + ATP + H2O = GMP + L-glutamate + AMP + diphosphate + 2 H(+). Its pathway is purine metabolism; GMP biosynthesis; GMP from XMP (L-Gln route): step 1/1. Functionally, catalyzes the synthesis of GMP from XMP. The polypeptide is GMP synthase [glutamine-hydrolyzing] (Alteromonas mediterranea (strain DSM 17117 / CIP 110805 / LMG 28347 / Deep ecotype)).